A 343-amino-acid chain; its full sequence is Ferrochelatase (343 aa).

Residues His211 and Glu292 each contribute to the Fe cation site.

The protein belongs to the ferrochelatase family.

Its subcellular location is the cytoplasm. The enzyme catalyses heme b + 2 H(+) = protoporphyrin IX + Fe(2+). It participates in porphyrin-containing compound metabolism; protoheme biosynthesis; protoheme from protoporphyrin-IX: step 1/1. In terms of biological role, catalyzes the ferrous insertion into protoporphyrin IX. This chain is Ferrochelatase, found in Gluconobacter oxydans (strain 621H) (Gluconobacter suboxydans).